The following is a 607-amino-acid chain: UvrABC system protein C (607 aa).

One can recognise a GIY-YIG domain in the interval 16–94 (GRPGVYRMFD…IKEWRPPYNI (79 aa)). A UVR domain is found at 203–238 (NALSDELNASMEKAAMALDFERAAELRDQVALLRRV).

It belongs to the UvrC family. Interacts with UvrB in an incision complex.

It localises to the cytoplasm. The UvrABC repair system catalyzes the recognition and processing of DNA lesions. UvrC both incises the 5' and 3' sides of the lesion. The N-terminal half is responsible for the 3' incision and the C-terminal half is responsible for the 5' incision. This is UvrABC system protein C from Pseudomonas syringae pv. tomato (strain ATCC BAA-871 / DC3000).